We begin with the raw amino-acid sequence, 663 residues long: Shugoshin 1 (663 aa).

2 coiled-coil regions span residues 8 to 29 (KQAFQDSLEDIKERMKEKRIKK) and 110 to 132 (DTAESKLASLKDIIAKVTHNLLE). Disordered stretches follow at residues 207-250 (RNTA…MNKN), 278-401 (EHTV…LNSG), and 417-478 (FRQN…ARKN). Composition is skewed to basic and acidic residues over residues 231–242 (RLEECNNEDKTE), 280–304 (TVVETERPFPTEEFSNESRTDREID), 339–358 (KNKEEPRVGRERVKKGKAER), and 366–394 (KPWENSKPRARSKSRDRSASKKSVAKEKM). The span at 427–437 (NESSLEISSSE) shows a compositional bias: low complexity. Residues 443-453 (SLYKPYKDKSK) show a composition bias toward basic and acidic residues.

Belongs to the shugoshin family. Binds microtubules. In terms of processing, ubiquitinated by the anaphase promoting complex (APC) at the onset of anaphase, conducting to its degradation.

The protein resides in the nucleus. Its subcellular location is the chromosome. The protein localises to the centromere. It is found in the kinetochore. It localises to the nucleus speckle. Functionally, plays a central role in chromosome cohesion during mitosis by preventing premature dissociation of cohesin complex from centromeres after prophase, when most of cohesin complex dissociates from chromosomes arms. May act by preventing phosphorylation of the stag2 subunit of cohesin complex at the centromere, ensuring cohesin persistence at centromere until cohesin cleavage by espl1/separase at anaphase. May regulate kinetochore microtubule stability in mitosis, possibly to sense tension on mitotic chromosomes. The polypeptide is Shugoshin 1 (Xenopus laevis (African clawed frog)).